The following is a 188-amino-acid chain: Photosystem I assembly protein Ycf4 (188 aa).

Transmembrane regions (helical) follow at residues 26–48 (MLWASVSAIGGIGFLLAGLSSYF) and 68–90 (AALTFYGVAGTLLSAYLWFVFFL).

This sequence belongs to the Ycf4 family.

It is found in the cellular thylakoid membrane. In terms of biological role, seems to be required for the assembly of the photosystem I complex. This Picosynechococcus sp. (strain ATCC 27264 / PCC 7002 / PR-6) (Agmenellum quadruplicatum) protein is Photosystem I assembly protein Ycf4.